A 717-amino-acid chain; its full sequence is DNA polymerase iota (717 aa).

The interval 1 to 22 is disordered; that stretch reads MEPLHAGAAGSSRAVCSQGPPT. Residues 30–243 enclose the UmuC domain; sequence IVHVDLDCFY…NHIKEIPGIG (214 aa). Mg(2+) contacts are provided by D34 and L35. Residues Y39 and R71 each contribute to the a 2'-deoxyribonucleoside 5'-triphosphate site. D126 contacts Mg(2+). Catalysis depends on E127, which acts as the Proton acceptor. DNA-binding stretches follow at residues 300-307 and 343-360; these read QSFSEEDT and RLVIRRYSDKHCNRESRQ. A Ubiquitin-binding 1 (UBM1) motif is present at residues 500 to 517; sequence VDQEVFKQLPADIQEEIL. Disordered regions lie at residues 549–589, 603–622, and 644–687; these read QMQA…SHPS, KDEQTSQGPTESQGCQFSST, and HRTV…DIDP. Positions 575-589 are enriched in low complexity; it reads PGTSGLSPGSTSHPS. Polar residues-rich tracts occupy residues 607–622 and 652–662; these read TSQGPTESQGCQFSST and QTATASHQGLE. Residues 665–679 are compositionally biased toward basic and acidic residues; the sequence is QGLESRELDSAEEKL. The short motif at 685–702 is the Ubiquitin-binding 2 (UBM2) element; the sequence is IDPQVFYELPEEVQKELM.

It belongs to the DNA polymerase type-Y family. Interacts with POLH. Interacts with REV1. Interacts with ubiquitin. Mg(2+) is required as a cofactor. The cofactor is Mn(2+). Monoubiquitinated. Protein monoubiquitination prevents POLI binding to ubiquitin via the ubiquitin-binding motif 1 and ubiquitin-binding motif 2. In terms of tissue distribution, detected in testis, and at very low levels in spleen, lung and brain. Detected in round spermatids, but not in prophase spermatocytes.

The protein resides in the nucleus. The enzyme catalyses DNA(n) + a 2'-deoxyribonucleoside 5'-triphosphate = DNA(n+1) + diphosphate. Functionally, error-prone DNA polymerase specifically involved in DNA repair. Plays an important role in translesion synthesis, where the normal high-fidelity DNA polymerases cannot proceed and DNA synthesis stalls. Favors Hoogsteen base-pairing in the active site. Inserts the correct base with high-fidelity opposite an adenosine template. Exhibits low fidelity and efficiency opposite a thymidine template, where it will preferentially insert guanosine. May play a role in hypermutation of immunoglobulin genes. Forms a Schiff base with 5'-deoxyribose phosphate at abasic sites, but may not have lyase activity. This is DNA polymerase iota (Poli) from Mus musculus (Mouse).